The primary structure comprises 28 residues: C-hordein (28 aa).

The tract at residues R1–L28 is disordered.

In terms of tissue distribution, developing endosperm.

Sulfur-poor seed storage protein. This chain is C-hordein, found in Hordeum vulgare subsp. spontaneum (Wild barley).